Consider the following 396-residue polypeptide: MSEFIAENRGADAITRPNWSAVFSVAFCVACLIIVEFLPVSLLTPMAQDLGISEGVAGQSVTVTAFVAMFASLFITQTIQATDRRYVVILFAVLLTLSCLLVSFANSFSLLLIGRACLGLALGGFWAISASLTMRLVPPRTVPKALSVIFGAVSIALVIAAPLGGFLGELIGWRNVFNAAAAMGVLCIFWIIKSLPSLPGEPSHQKQNTFRLLQRPGVMAGMIAIFMSFAGQFAFFTYIRPVYMNLAGFGVDGLTLVLLSFGIASFVGTSLSSFILKRSVKLALAGAPFVLALSALVLTLWGSDKIVATGVAIIWGLTFALIPVGWSTWITRSLADQAEKAGSIQVAVIQLANTCGAAIGGYALDNIGLTSPLMLSGTLMLLTALLVTAKVKMKKS.

At 1–21 the chain is on the cytoplasmic side; it reads MSEFIAENRGADAITRPNWSA. The chain crosses the membrane as a helical span at residues 22–42; it reads VFSVAFCVACLIIVEFLPVSL. Residues 43 to 54 are Periplasmic-facing; sequence LTPMAQDLGISE. The chain crosses the membrane as a helical span at residues 55-75; that stretch reads GVAGQSVTVTAFVAMFASLFI. At 76-85 the chain is on the cytoplasmic side; it reads TQTIQATDRR. The chain crosses the membrane as a helical span at residues 86-106; that stretch reads YVVILFAVLLTLSCLLVSFAN. Serine 107 is a topological domain (periplasmic). The helical transmembrane segment at 108 to 128 threads the bilayer; it reads FSLLLIGRACLGLALGGFWAI. Topologically, residues 129–147 are cytoplasmic; sequence SASLTMRLVPPRTVPKALS. A helical transmembrane segment spans residues 148-168; the sequence is VIFGAVSIALVIAAPLGGFLG. At 169 to 175 the chain is on the periplasmic side; sequence ELIGWRN. The helical transmembrane segment at 176 to 196 threads the bilayer; it reads VFNAAAAMGVLCIFWIIKSLP. Residues 197–215 lie on the Cytoplasmic side of the membrane; sequence SLPGEPSHQKQNTFRLLQR. A helical membrane pass occupies residues 216 to 236; that stretch reads PGVMAGMIAIFMSFAGQFAFF. The Periplasmic segment spans residues 237 to 255; the sequence is TYIRPVYMNLAGFGVDGLT. Residues 256 to 276 form a helical membrane-spanning segment; it reads LVLLSFGIASFVGTSLSSFIL. At 277–281 the chain is on the cytoplasmic side; that stretch reads KRSVK. Residues 282-302 traverse the membrane as a helical segment; that stretch reads LALAGAPFVLALSALVLTLWG. Residues 303 to 305 are Periplasmic-facing; the sequence is SDK. Residues 306–326 traverse the membrane as a helical segment; that stretch reads IVATGVAIIWGLTFALIPVGW. Residues 327–343 are Cytoplasmic-facing; the sequence is STWITRSLADQAEKAGS. A helical membrane pass occupies residues 344-364; sequence IQVAVIQLANTCGAAIGGYAL. At 365–366 the chain is on the periplasmic side; that stretch reads DN. Residues 367-387 form a helical membrane-spanning segment; sequence IGLTSPLMLSGTLMLLTALLV. The Cytoplasmic portion of the chain corresponds to 388-396; it reads TAKVKMKKS.

Belongs to the major facilitator superfamily. DHA1 family. NepI (TC 2.A.1.2.26) subfamily.

Its subcellular location is the cell inner membrane. It carries out the reaction inosine(in) + H(+)(out) = inosine(out) + H(+)(in). The catalysed reaction is guanosine(in) + H(+)(out) = guanosine(out) + H(+)(in). Functionally, involved in the efflux of purine ribonucleosides, such as inosine and guanosine. The polypeptide is Purine ribonucleoside efflux pump NepI (Escherichia coli O127:H6 (strain E2348/69 / EPEC)).